The sequence spans 126 residues: Large ribosomal subunit protein eL32 (126 aa).

Belongs to the eukaryotic ribosomal protein eL32 family.

The chain is Large ribosomal subunit protein eL32 from Thermococcus onnurineus (strain NA1).